We begin with the raw amino-acid sequence, 131 residues long: Profilin (131 aa).

It belongs to the profilin family. Occurs in many kinds of cells as a complex with monomeric actin in a 1:1 ratio.

It localises to the cytoplasm. The protein localises to the cytoskeleton. Functionally, binds to actin and affects the structure of the cytoskeleton. At high concentrations, profilin prevents the polymerization of actin, whereas it enhances it at low concentrations. By binding to PIP2, it inhibits the formation of IP3 and DG. The protein is Profilin of Citrus sinensis (Sweet orange).